A 472-amino-acid chain; its full sequence is Glutamine synthetase (472 aa).

The GS beta-grasp domain occupies 17 to 101; sequence NNVKFVLLRF…IRCSVYEPTT (85 aa). The GS catalytic domain maps to 109 to 472; that stretch reads PRSIAIRAEN…HPVEFEMYYA (364 aa). Mg(2+) is bound by residues Glu134 and Glu136. Glu212 provides a ligand contact to ATP. Residues Glu217 and Glu225 each contribute to the Mg(2+) site. Residues 269–270 and Gly270 contribute to the L-glutamate site; that span reads NG. His274 is a Mg(2+) binding site. ATP is bound by residues 276–278 and Ser278; that span reads NMS. L-glutamate-binding residues include Arg326, Glu332, and Arg344. ATP-binding residues include Arg344, Arg349, and Lys357. A Mg(2+)-binding site is contributed by Glu362. Position 364 (Arg364) interacts with L-glutamate. The residue at position 402 (Tyr402) is an O-AMP-tyrosine.

This sequence belongs to the glutamine synthetase family. Oligomer of 12 subunits arranged in the form of two hexameric ring. Mg(2+) is required as a cofactor.

It is found in the cytoplasm. The catalysed reaction is L-glutamate + NH4(+) + ATP = L-glutamine + ADP + phosphate + H(+). Its activity is regulated as follows. The activity of this enzyme could be controlled by adenylation under conditions of abundant glutamine. Catalyzes the ATP-dependent biosynthesis of glutamine from glutamate and ammonia. This Haemophilus influenzae (strain ATCC 51907 / DSM 11121 / KW20 / Rd) protein is Glutamine synthetase.